The chain runs to 270 residues: 4-hydroxy-tetrahydrodipicolinate reductase (270 aa).

Residues 9–14 (GAGGRM) and glutamate 35 each bind NAD(+). NADP(+) is bound at residue arginine 36. Residues 99-101 (GTT) and 123-126 (ASNY) contribute to the NAD(+) site. Histidine 156 functions as the Proton donor/acceptor in the catalytic mechanism. Histidine 157 is a binding site for (S)-2,3,4,5-tetrahydrodipicolinate. Catalysis depends on lysine 160, which acts as the Proton donor. Residue 166 to 167 (GT) participates in (S)-2,3,4,5-tetrahydrodipicolinate binding.

Belongs to the DapB family.

Its subcellular location is the cytoplasm. It catalyses the reaction (S)-2,3,4,5-tetrahydrodipicolinate + NAD(+) + H2O = (2S,4S)-4-hydroxy-2,3,4,5-tetrahydrodipicolinate + NADH + H(+). The enzyme catalyses (S)-2,3,4,5-tetrahydrodipicolinate + NADP(+) + H2O = (2S,4S)-4-hydroxy-2,3,4,5-tetrahydrodipicolinate + NADPH + H(+). It functions in the pathway amino-acid biosynthesis; L-lysine biosynthesis via DAP pathway; (S)-tetrahydrodipicolinate from L-aspartate: step 4/4. Functionally, catalyzes the conversion of 4-hydroxy-tetrahydrodipicolinate (HTPA) to tetrahydrodipicolinate. In Histophilus somni (strain 129Pt) (Haemophilus somnus), this protein is 4-hydroxy-tetrahydrodipicolinate reductase.